Here is a 217-residue protein sequence, read N- to C-terminus: Zinc finger CCHC-type and RNA-binding motif-containing protein 1 (217 aa).

The RRM domain occupies 10-88; the sequence is STVYVSNLPF…RVIKASIAID (79 aa). The segment at 105–122 adopts a CCHC-type zinc-finger fold; the sequence is SKCYECGESGHLSYACPK. Positions 120–217 are disordered; it reads CPKNMLGERE…YFSDEEELSD (98 aa). Residues 145 to 163 are compositionally biased toward acidic residues; sequence PEEEIEEVEESEDEGEDPA. S155, S210, and S216 each carry phosphoserine.

In terms of assembly, component of the U11/U12 snRNPs that are part of the U12-type spliceosome. Interacts with ZRSR1.

The protein localises to the nucleus. It is found in the nucleoplasm. The polypeptide is Zinc finger CCHC-type and RNA-binding motif-containing protein 1 (ZCRB1) (Bos taurus (Bovine)).